The chain runs to 626 residues: Chaperone protein HtpG (626 aa).

An a; substrate-binding region spans residues 1–331; sequence MSETVERHEF…TDDLPLNVSR (331 aa). The tract at residues 332–544 is b; it reads EMLQSTPTLQ…GMGPDLQMQR (213 aa). Positions 545–626 are c; sequence LLRRAGRGFG…GTAAKPAGSA (82 aa).

It belongs to the heat shock protein 90 family. Homodimer.

The protein resides in the cytoplasm. Molecular chaperone. Has ATPase activity. This chain is Chaperone protein HtpG, found in Methylorubrum extorquens (strain CM4 / NCIMB 13688) (Methylobacterium extorquens).